The sequence spans 274 residues: Large ribosomal subunit protein uL2 (274 aa).

Disordered stretches follow at residues 37–60 and 224–252; these read QHQKSGRNNNGHITTRHKGGGHKH and AMNPIDHPHGGGEGRTGEGRHAVDPWGNL. A compositionally biased stretch (basic residues) spans 50 to 60; the sequence is TTRHKGGGHKH. A compositionally biased stretch (basic and acidic residues) spans 229-246; it reads DHPHGGGEGRTGEGRHAV.

It belongs to the universal ribosomal protein uL2 family. As to quaternary structure, part of the 50S ribosomal subunit. Forms a bridge to the 30S subunit in the 70S ribosome.

One of the primary rRNA binding proteins. Required for association of the 30S and 50S subunits to form the 70S ribosome, for tRNA binding and peptide bond formation. It has been suggested to have peptidyltransferase activity; this is somewhat controversial. Makes several contacts with the 16S rRNA in the 70S ribosome. The sequence is that of Large ribosomal subunit protein uL2 from Paracidovorax citrulli (strain AAC00-1) (Acidovorax citrulli).